Here is a 154-residue protein sequence, read N- to C-terminus: SsrA-binding protein (154 aa).

It belongs to the SmpB family.

The protein localises to the cytoplasm. In terms of biological role, required for rescue of stalled ribosomes mediated by trans-translation. Binds to transfer-messenger RNA (tmRNA), required for stable association of tmRNA with ribosomes. tmRNA and SmpB together mimic tRNA shape, replacing the anticodon stem-loop with SmpB. tmRNA is encoded by the ssrA gene; the 2 termini fold to resemble tRNA(Ala) and it encodes a 'tag peptide', a short internal open reading frame. During trans-translation Ala-aminoacylated tmRNA acts like a tRNA, entering the A-site of stalled ribosomes, displacing the stalled mRNA. The ribosome then switches to translate the ORF on the tmRNA; the nascent peptide is terminated with the 'tag peptide' encoded by the tmRNA and targeted for degradation. The ribosome is freed to recommence translation, which seems to be the essential function of trans-translation. The protein is SsrA-binding protein of Staphylococcus aureus (strain USA300).